The following is a 222-amino-acid chain: Physcion biosynthesis cluster O-methyltransferase (222 aa).

It belongs to the methyltransferase superfamily.

It catalyses the reaction emodin + S-adenosyl-L-methionine = physcion + S-adenosyl-L-homocysteine. It participates in secondary metabolite biosynthesis. Its function is as follows. O-methyltransferase; part of the gene cluster that mediates the biosynthesis of physcion, a natural anthraquinone fungicide that can prevent plant fungal infections. Within the pathway, the O-methyltransferase AcOMT catalyzes the last step by transferring a methyl group to C-6 hydroxyl of emodin to form physcion. AcOMT may also methylate the C-6 hydroxyl group of emodin anthrone to produce physcion-anthrone B. The pathway begins with the polyketide synthase AcPKS that condenses 8 malonyl-CoA units to synthesize atrochrysone thioester which is released from the synthase by the atrochrysone carboxyl ACP thioesterase AcTE that breaks the thioester bond and leads to free atrochrysone carboxylic acid. Spontaneous decarboxylation of atrochrysone carboxylic acid leads to the formation of atrochrysone. Then, atrochrysone undergoes spontaneous dehydration and oxidation, giving the products emodin anthrone and emodin. The O-methyltransferase AcOMT then methylates the C-6 hydroxyl of emodin to form physcion. This is Physcion biosynthesis cluster O-methyltransferase from Aspergillus chevalieri (Eurotium chevalieri).